The following is a 75-amino-acid chain: MTAPVTRAAPEPLAERRIALVDLLDRLLAGGVVLTGDLTLSIADVDLVRVDLKALISSVGEDVPSPWEPLREVRP.

Belongs to the gas vesicle GvpA family.

The protein resides in the gas vesicle. In terms of biological role, probably a minor component of the gas vesicle. Gas vesicles are hollow, gas filled proteinaceous nanostructures found in some microorganisms. It is not clear what function gas vesicles perform in soil bacteria. The protein is Gas vesicle protein S of Streptomyces sp. (strain CB03234).